The following is an 879-amino-acid chain: Alanine--tRNA ligase (879 aa).

Histidine 566, histidine 570, cysteine 668, and histidine 672 together coordinate Zn(2+).

This sequence belongs to the class-II aminoacyl-tRNA synthetase family. Zn(2+) is required as a cofactor.

Its subcellular location is the cytoplasm. The catalysed reaction is tRNA(Ala) + L-alanine + ATP = L-alanyl-tRNA(Ala) + AMP + diphosphate. Functionally, catalyzes the attachment of alanine to tRNA(Ala) in a two-step reaction: alanine is first activated by ATP to form Ala-AMP and then transferred to the acceptor end of tRNA(Ala). Also edits incorrectly charged Ser-tRNA(Ala) and Gly-tRNA(Ala) via its editing domain. The sequence is that of Alanine--tRNA ligase from Clostridium tetani (strain Massachusetts / E88).